Consider the following 117-residue polypeptide: Appetite-regulating hormone (117 aa).

Residues 1-23 (MPSPGTVCSLLLLGMLWLDLAMA) form the signal peptide. Ser26 carries the O-decanoyl serine; alternate lipid modification. Ser26 is lipidated: O-hexanoyl serine; alternate. A lipid anchor (O-octanoyl serine; alternate) is attached at Ser26. Positions 29–67 (SPEHQRAQQRKESKKPPAKLQPRALGGWLRPEDGDQAEG) are disordered. Basic and acidic residues predominate over residues 31–43 (EHQRAQQRKESKK). A propeptide spans 52 to 75 (ALGGWLRPEDGDQAEGAEDELEIQ) (removed in mature form). Leu98 carries the post-translational modification Leucine amide. Residues 99–117 (GKFLQDILWEEAKEAPADK) constitute a propeptide, removed in mature form.

Belongs to the motilin family. O-octanoylated by GOAT/MBOAT4. O-octanoylation is essential for ghrelin activity. Post-translationally, amidation of Leu-98 is essential for obestatin activity.

The protein resides in the secreted. Ghrelin is the ligand for growth hormone secretagogue receptor type 1 (GHSR). Induces the release of growth hormone from the pituitary. Has an appetite-stimulating effect, induces adiposity and stimulates gastric acid secretion. Involved in growth regulation. Its function is as follows. Obestatin may be the ligand for GPR39. May have an appetite-reducing effect resulting in decreased food intake. May reduce gastric emptying activity and jejunal motility. The sequence is that of Appetite-regulating hormone (GHRL) from Papio hamadryas (Hamadryas baboon).